Here is a 757-residue protein sequence, read N- to C-terminus: Elongation factor G, mitochondrial (757 aa).

The transit peptide at 1–39 (MLLVPRVPVVMQGKCGLLKISRPLQGSLSRGFHFSRAHR) directs the protein to the mitochondrion. The tr-type G domain occupies 65–346 (QKLRNIGISA…AIVDYLPNPS (282 aa)). GTP contacts are provided by residues 74–81 (AHIDSGKT), 145–149 (DTPGH), and 199–202 (NKMD).

It belongs to the TRAFAC class translation factor GTPase superfamily. Classic translation factor GTPase family. EF-G/EF-2 subfamily.

The protein resides in the mitochondrion. It functions in the pathway protein biosynthesis; polypeptide chain elongation. Functionally, mitochondrial GTPase that catalyzes the GTP-dependent ribosomal translocation step during translation elongation. During this step, the ribosome changes from the pre-translocational (PRE) to the post-translocational (POST) state as the newly formed A-site-bound peptidyl-tRNA and P-site-bound deacylated tRNA move to the P and E sites, respectively. Catalyzes the coordinated movement of the two tRNA molecules, the mRNA and conformational changes in the ribosome. The chain is Elongation factor G, mitochondrial from Candida glabrata (strain ATCC 2001 / BCRC 20586 / JCM 3761 / NBRC 0622 / NRRL Y-65 / CBS 138) (Yeast).